A 549-amino-acid polypeptide reads, in one-letter code: Probable protein kinase UbiB (549 aa).

A Protein kinase domain is found at 123–501 (DFDETPLASA…QQQAHKSNYL (379 aa)). Residues 129–137 (LASASISQV) and K152 each bind ATP. Catalysis depends on D287, which acts as the Proton acceptor. A run of 2 helical transmembrane segments spans residues 498-518 (SNYLLITSAILLICGTLLFNQ) and 520-540 (ATLWSPYVCLISGAVLWIIGW).

It belongs to the ABC1 family. UbiB subfamily.

The protein resides in the cell inner membrane. It participates in cofactor biosynthesis; ubiquinone biosynthesis [regulation]. Its function is as follows. Is probably a protein kinase regulator of UbiI activity which is involved in aerobic coenzyme Q (ubiquinone) biosynthesis. In Shewanella sp. (strain ANA-3), this protein is Probable protein kinase UbiB.